A 407-amino-acid chain; its full sequence is tRNA pseudouridine synthase Pus10 (407 aa).

Aspartate 232 acts as the Nucleophile in catalysis. Tyrosine 300 and tyrosine 369 together coordinate substrate.

Belongs to the pseudouridine synthase Pus10 family.

It carries out the reaction uridine(54) in tRNA = pseudouridine(54) in tRNA. The catalysed reaction is uridine(55) in tRNA = pseudouridine(55) in tRNA. Its function is as follows. Responsible for synthesis of pseudouridine from uracil-54 and uracil-55 in the psi GC loop of transfer RNAs. The chain is tRNA pseudouridine synthase Pus10 from Methanosphaera stadtmanae (strain ATCC 43021 / DSM 3091 / JCM 11832 / MCB-3).